Reading from the N-terminus, the 212-residue chain is Thymidylate kinase (212 aa).

11 to 18 provides a ligand contact to ATP; the sequence is GPEGAGKT.

This sequence belongs to the thymidylate kinase family.

It carries out the reaction dTMP + ATP = dTDP + ADP. Its function is as follows. Phosphorylation of dTMP to form dTDP in both de novo and salvage pathways of dTTP synthesis. This chain is Thymidylate kinase, found in Streptococcus pneumoniae (strain Hungary19A-6).